Reading from the N-terminus, the 471-residue chain is Mitochondrial distribution and morphology protein 10 (471 aa).

Residues 429-455 (PSSFSSPSRAANSTPAGGGQSVGGGIS) are disordered. Gly residues predominate over residues 444–455 (AGGGQSVGGGIS).

Belongs to the MDM10 family. In terms of assembly, component of the ER-mitochondria encounter structure (ERMES) or MDM complex, composed of mmm1, mdm10, mdm12 and mdm34. Associates with the mitochondrial outer membrane sorting assembly machinery SAM(core) complex.

The protein localises to the mitochondrion outer membrane. Functionally, component of the ERMES/MDM complex, which serves as a molecular tether to connect the endoplasmic reticulum and mitochondria. Components of this complex are involved in the control of mitochondrial shape and protein biogenesis and may function in phospholipid exchange. mdm10 is involved in the late assembly steps of the general translocase of the mitochondrial outer membrane (TOM complex). Functions in the tom40-specific route of the assembly of outer membrane beta-barrel proteins, including the association of tom40 with the receptor tom22 and small TOM proteins. Can associate with the SAM(core) complex as well as the mdm12-mmm1 complex, both involved in late steps of the major beta-barrel assembly pathway, that is responsible for biogenesis of all outer membrane beta-barrel proteins. May act as a switch that shuttles between both complexes and channels precursor proteins into the tom40-specific pathway. Plays a role in mitochondrial morphology and in the inheritance of mitochondria. The chain is Mitochondrial distribution and morphology protein 10 (mdmB) from Aspergillus fumigatus (strain ATCC MYA-4609 / CBS 101355 / FGSC A1100 / Af293) (Neosartorya fumigata).